The sequence spans 194 residues: Putative manganese efflux pump MntP (194 aa).

Helical transmembrane passes span 3 to 23 (PFSI…AAIG), 37 to 57 (LRAG…GWLL), 69 to 89 (DHWI…VAGL), 110 to 132 (LGLA…SLAF), 147 to 167 (CTFS…NLIG), and 172 to 192 (MLGG…HLSG).

The protein belongs to the MntP (TC 9.B.29) family.

The protein localises to the cell inner membrane. Functionally, probably functions as a manganese efflux pump. The polypeptide is Putative manganese efflux pump MntP (Xanthomonas euvesicatoria pv. vesicatoria (strain 85-10) (Xanthomonas campestris pv. vesicatoria)).